The following is an 82-amino-acid chain: ATP synthase subunit c, chloroplastic (82 aa).

Position 1 is an N-formylmethionine (Met-1). A run of 2 helical transmembrane segments spans residues 3–23 (PIVAATSVVSAGLAVGLAAIG) and 57–77 (FAFMESLTIYGLVVALALLFA).

The protein belongs to the ATPase C chain family. In terms of assembly, F-type ATPases have 2 components, F(1) - the catalytic core - and F(0) - the membrane proton channel. F(1) has five subunits: alpha(3), beta(3), gamma(1), delta(1), epsilon(1). F(0) has four main subunits: a(1), b(1), b'(1) and c(10-14). The alpha and beta chains form an alternating ring which encloses part of the gamma chain. F(1) is attached to F(0) by a central stalk formed by the gamma and epsilon chains, while a peripheral stalk is formed by the delta, b and b' chains.

The protein localises to the plastid. It is found in the chloroplast thylakoid membrane. In terms of biological role, f(1)F(0) ATP synthase produces ATP from ADP in the presence of a proton or sodium gradient. F-type ATPases consist of two structural domains, F(1) containing the extramembraneous catalytic core and F(0) containing the membrane proton channel, linked together by a central stalk and a peripheral stalk. During catalysis, ATP synthesis in the catalytic domain of F(1) is coupled via a rotary mechanism of the central stalk subunits to proton translocation. Functionally, key component of the F(0) channel; it plays a direct role in translocation across the membrane. A homomeric c-ring of between 10-14 subunits forms the central stalk rotor element with the F(1) delta and epsilon subunits. This Chlamydomonas reinhardtii (Chlamydomonas smithii) protein is ATP synthase subunit c, chloroplastic.